The sequence spans 397 residues: GTPase Obg (397 aa).

Residues 1–159 (MKFVDEAEIR…RMLKLELMLL (159 aa)) form the Obg domain. Positions 22–44 (SFRREKYVPDGGPDGGDGGDGGS) are disordered. A compositionally biased stretch (gly residues) spans 33–43 (GPDGGDGGDGG). The region spanning 160–333 (ADVGLLGMPN…LCIKVMDFIE (174 aa)) is the OBG-type G domain. GTP is bound by residues 166 to 173 (GMPNAGKS), 191 to 195 (FTTLV), 213 to 216 (DIPG), 283 to 286 (NKVD), and 314 to 316 (SAV). 2 residues coordinate Mg(2+): Ser-173 and Thr-193. The segment at 359–389 (TVENYEDDDDFDDDDDDDFDGDDDDDFDGDD) is disordered. The segment covering 361–389 (ENYEDDDDFDDDDDDDFDGDDDDDFDGDD) has biased composition (acidic residues).

This sequence belongs to the TRAFAC class OBG-HflX-like GTPase superfamily. OBG GTPase family. Monomer. Requires Mg(2+) as cofactor.

Its subcellular location is the cytoplasm. Functionally, an essential GTPase which binds GTP, GDP and possibly (p)ppGpp with moderate affinity, with high nucleotide exchange rates and a fairly low GTP hydrolysis rate. Plays a role in control of the cell cycle, stress response, ribosome biogenesis and in those bacteria that undergo differentiation, in morphogenesis control. This Pseudoalteromonas atlantica (strain T6c / ATCC BAA-1087) protein is GTPase Obg.